Consider the following 342-residue polypeptide: Uroporphyrinogen decarboxylase (342 aa).

Residues 26–30 (RQAGR), Asp-76, Tyr-150, Ser-205, and His-321 contribute to the substrate site.

Belongs to the uroporphyrinogen decarboxylase family. In terms of assembly, homodimer.

Its subcellular location is the cytoplasm. The catalysed reaction is uroporphyrinogen III + 4 H(+) = coproporphyrinogen III + 4 CO2. The protein operates within porphyrin-containing compound metabolism; protoporphyrin-IX biosynthesis; coproporphyrinogen-III from 5-aminolevulinate: step 4/4. Catalyzes the decarboxylation of four acetate groups of uroporphyrinogen-III to yield coproporphyrinogen-III. The protein is Uroporphyrinogen decarboxylase of Sphingopyxis alaskensis (strain DSM 13593 / LMG 18877 / RB2256) (Sphingomonas alaskensis).